Consider the following 402-residue polypeptide: LIM/homeobox protein Lhx5 (402 aa).

LIM zinc-binding domains follow at residues 3 to 61 and 62 to 125; these read AHCA…RRFG and TKCA…ASSL. 3 disordered regions span residues 133–187, 291–335, and 365–392; these read VSSC…RTTI, NYDF…GHHP, and SGEVFTGGPSPPFSMSNNSGFSGPLPHQ. Residues 151-167 show a composition bias toward basic and acidic residues; it reads DESKETDHSTSSDKETA. The homeobox DNA-binding region spans 180–239; it reads RRGPRTTIKAKQLETLKAAFIATPKPTRHIREQLAQETGLNMRVIQVWFQNRRSKERRMK. Positions 300-319 are enriched in polar residues; the sequence is PSSQTQSPADSSYLQNSGPG.

Interacts with ldb1 and with the N-terminus of rnf12.

It localises to the nucleus. In terms of biological role, probably involved in the patterning of the nervous system, in particular in the early specification of the diencephalon. This chain is LIM/homeobox protein Lhx5 (lhx5), found in Xenopus laevis (African clawed frog).